A 172-amino-acid polypeptide reads, in one-letter code: Adrenodoxin-like protein 1, mitochondrial (172 aa).

One can recognise a 2Fe-2S ferredoxin-type domain in the interval 57-159; that stretch reads VNITYVDKDG…GMELELPKAT (103 aa). [2Fe-2S] cluster-binding residues include Cys-94, Cys-100, Cys-103, and Cys-140.

The protein belongs to the adrenodoxin/putidaredoxin family. [2Fe-2S] cluster is required as a cofactor.

Its subcellular location is the mitochondrion matrix. Its function is as follows. Required for ecdysteroidogenesis in the prothoracic gland which is necessary for larval to pupal transition. In Drosophila melanogaster (Fruit fly), this protein is Adrenodoxin-like protein 1, mitochondrial.